A 175-amino-acid chain; its full sequence is Phosphatidylglycerol/phosphatidylinositol transfer protein (175 aa).

The N-terminal stretch at 1 to 21 (MKFLSTAAALLVCLAPVSTTA) is a signal peptide. Positions 22 to 37 (RSLDFFKSSQSPIQAQ) are excised as a propeptide.

The protein belongs to the NPC2 family. In terms of assembly, monomer.

The protein resides in the cytoplasm. Its subcellular location is the cytoplasmic vesicle. The protein localises to the golgi apparatus. Catalyzes the intermembrane transfer of phosphatidylglycerol and phosphatidylinositol. The polypeptide is Phosphatidylglycerol/phosphatidylinositol transfer protein (pltp) (Aspergillus oryzae (strain ATCC 42149 / RIB 40) (Yellow koji mold)).